The sequence spans 442 residues: Cytokine receptor-like factor 3 (442 aa).

The residue at position 1 (methionine 1) is an N-acetylmethionine. Positions 10–57 form a coiled coil; it reads ELLLQEARENVEAAQSYRRELGHRLEGLREARRQIKESASQTRDVLKQ. A Fibronectin type-III domain is found at 181 to 274; sequence PPVQIEELIE…PQIGHSTLVP (94 aa).

This sequence belongs to the cytokine receptor-like factor 3 family. As to expression, expressed in several embryonic and adult tissues, including adult and fetal brain, liver, spleen and pancreas. Expressed in adult, but not fetal kidney. Expressed in skin and squamous cell carcinoma (SCC) and in several other cancer types. Also detected in lesion actinic keratosis (AK).

It localises to the cytoplasm. In terms of biological role, may play a role in the negative regulation of cell cycle progression. The chain is Cytokine receptor-like factor 3 (CRLF3) from Homo sapiens (Human).